The following is a 282-amino-acid chain: Large ribosomal subunit protein uL2 (282 aa).

Disordered regions lie at residues 31–54 and 223–282; these read KRLTKPVRKSGGRNAHGKVTTRHI and LAMN…NTQR. Composition is skewed to basic residues over residues 34–54 and 270–282; these read TKPVRKSGGRNAHGKVTTRHI and VTRRRPGVRNTQR.

The protein belongs to the universal ribosomal protein uL2 family. Part of the 50S ribosomal subunit. Forms a bridge to the 30S subunit in the 70S ribosome.

In terms of biological role, one of the primary rRNA binding proteins. Required for association of the 30S and 50S subunits to form the 70S ribosome, for tRNA binding and peptide bond formation. It has been suggested to have peptidyltransferase activity; this is somewhat controversial. Makes several contacts with the 16S rRNA in the 70S ribosome. In Anaeromyxobacter dehalogenans (strain 2CP-1 / ATCC BAA-258), this protein is Large ribosomal subunit protein uL2.